The chain runs to 198 residues: ATP-dependent Clp protease proteolytic subunit 1 (198 aa).

Residue Ser98 is the Nucleophile of the active site. His123 is a catalytic residue.

This sequence belongs to the peptidase S14 family. Fourteen ClpP subunits assemble into 2 heptameric rings which stack back to back to give a disk-like structure with a central cavity, resembling the structure of eukaryotic proteasomes.

Its subcellular location is the cytoplasm. It catalyses the reaction Hydrolysis of proteins to small peptides in the presence of ATP and magnesium. alpha-casein is the usual test substrate. In the absence of ATP, only oligopeptides shorter than five residues are hydrolyzed (such as succinyl-Leu-Tyr-|-NHMec, and Leu-Tyr-Leu-|-Tyr-Trp, in which cleavage of the -Tyr-|-Leu- and -Tyr-|-Trp bonds also occurs).. Its function is as follows. Cleaves peptides in various proteins in a process that requires ATP hydrolysis. Has a chymotrypsin-like activity. Plays a major role in the degradation of misfolded proteins. ClpXP1 is involved in the complete degradation of the Site-2 clipped anti-sigma-W factor RsiW. This results in the release of SigW and the transcription activation of the genes under the control of the sigma-W factor. The sequence is that of ATP-dependent Clp protease proteolytic subunit 1 from Bacillus licheniformis (strain ATCC 14580 / DSM 13 / JCM 2505 / CCUG 7422 / NBRC 12200 / NCIMB 9375 / NCTC 10341 / NRRL NRS-1264 / Gibson 46).